The sequence spans 295 residues: 4-hydroxy-tetrahydrodipicolinate synthase (295 aa).

Threonine 48 is a pyruvate binding site. Tyrosine 135 (proton donor/acceptor) is an active-site residue. Catalysis depends on lysine 163, which acts as the Schiff-base intermediate with substrate. Position 204 (valine 204) interacts with pyruvate.

Belongs to the DapA family. Homotetramer; dimer of dimers.

The protein resides in the cytoplasm. It carries out the reaction L-aspartate 4-semialdehyde + pyruvate = (2S,4S)-4-hydroxy-2,3,4,5-tetrahydrodipicolinate + H2O + H(+). Its pathway is amino-acid biosynthesis; L-lysine biosynthesis via DAP pathway; (S)-tetrahydrodipicolinate from L-aspartate: step 3/4. In terms of biological role, catalyzes the condensation of (S)-aspartate-beta-semialdehyde [(S)-ASA] and pyruvate to 4-hydroxy-tetrahydrodipicolinate (HTPA). The polypeptide is 4-hydroxy-tetrahydrodipicolinate synthase (Francisella philomiragia subsp. philomiragia (strain ATCC 25017 / CCUG 19701 / FSC 153 / O#319-036)).